The following is a 379-amino-acid chain: SUN domain-containing protein 5 (379 aa).

The segment at 1–45 is disordered; the sequence is MPRSSRSPGDPGALLEDVAHNPRPRRIAQRGRNTSRMAEDTSPNM. Residues 1-105 are Nuclear-facing; the sequence is MPRSSRSPGD…LLCQKLMEKT (105 aa). Positions 31-45 are enriched in polar residues; the sequence is GRNTSRMAEDTSPNM. The chain crosses the membrane as a helical span at residues 106-122; sequence GILLLCAFGFWMFSIHL. Residues 123 to 379 are Perinuclear space-facing; the sequence is PSKMKVWQDD…PHQNPYPKRD (257 aa). Residues 141-182 adopt a coiled-coil conformation; that stretch reads LRLYQEKVRHHSGEIQDLRGSMNQLIAKLQEMEAMSDEQKMA. The region spanning 205-364 is the SUN domain; sequence GASIDFEHTS…YRVRVHGSVA (160 aa).

As to quaternary structure, probable homotrimer. Interacts with DNAJB13. Highly glycosylated in the Golgi apparatus during spermiogenesis. Sperm (at protein level). Widely expressed. Conflictingly shown to be specifically expressed in testis.

Its subcellular location is the nucleus inner membrane. It localises to the golgi apparatus. Plays an essential role in anchoring sperm head to the tail. Is responsible for the attachment of the coupling apparatus to the sperm nuclear envelope. The protein is SUN domain-containing protein 5 (SUN5) of Homo sapiens (Human).